Here is a 528-residue protein sequence, read N- to C-terminus: Lysine--tRNA ligase (528 aa).

The 'HIGH' region signature appears at 36-44; sequence PSGTVHIGN. The 'KMSKS' region motif lies at 287–291; the sequence is KMSSS.

This sequence belongs to the class-I aminoacyl-tRNA synthetase family.

Its subcellular location is the cytoplasm. The catalysed reaction is tRNA(Lys) + L-lysine + ATP = L-lysyl-tRNA(Lys) + AMP + diphosphate. The sequence is that of Lysine--tRNA ligase (lysS) from Treponema pallidum (strain Nichols).